We begin with the raw amino-acid sequence, 393 residues long: NAD(P)H-quinone oxidoreductase subunit H, chloroplastic (393 aa).

It belongs to the complex I 49 kDa subunit family. In terms of assembly, NDH is composed of at least 16 different subunits, 5 of which are encoded in the nucleus.

It is found in the plastid. Its subcellular location is the chloroplast thylakoid membrane. It catalyses the reaction a plastoquinone + NADH + (n+1) H(+)(in) = a plastoquinol + NAD(+) + n H(+)(out). The enzyme catalyses a plastoquinone + NADPH + (n+1) H(+)(in) = a plastoquinol + NADP(+) + n H(+)(out). Its function is as follows. NDH shuttles electrons from NAD(P)H:plastoquinone, via FMN and iron-sulfur (Fe-S) centers, to quinones in the photosynthetic chain and possibly in a chloroplast respiratory chain. The immediate electron acceptor for the enzyme in this species is believed to be plastoquinone. Couples the redox reaction to proton translocation, and thus conserves the redox energy in a proton gradient. The protein is NAD(P)H-quinone oxidoreductase subunit H, chloroplastic of Drimys granadensis.